The sequence spans 78 residues: Putative defensin-like protein 133 (78 aa).

A signal peptide spans 1–24 (MKRSFLLLLTILTIFIILGQGVMG). 4 cysteine pairs are disulfide-bonded: Cys-34-Cys-75, Cys-44-Cys-68, Cys-49-Cys-72, and Cys-53-Cys-74.

This sequence belongs to the DEFL family.

It is found in the secreted. The sequence is that of Putative defensin-like protein 133 (LCR33) from Arabidopsis thaliana (Mouse-ear cress).